Reading from the N-terminus, the 716-residue chain is Phosphoribosylformylglycinamidine synthase subunit PurL (716 aa).

The active site involves histidine 34. Tyrosine 37 contributes to the ATP binding site. Glutamate 78 contributes to the Mg(2+) binding site. Substrate-binding positions include 79-82 and arginine 101; that span reads SHNH. Histidine 80 acts as the Proton acceptor in catalysis. Mg(2+) is bound at residue aspartate 102. Residue glutamine 226 participates in substrate binding. Aspartate 254 is a Mg(2+) binding site. 298 to 300 provides a ligand contact to substrate; sequence ESQ. Positions 474 and 511 each coordinate ATP. A Mg(2+)-binding site is contributed by asparagine 512. A substrate-binding site is contributed by serine 514.

Belongs to the FGAMS family. In terms of assembly, monomer. Part of the FGAM synthase complex composed of 1 PurL, 1 PurQ and 2 PurS subunits.

The protein localises to the cytoplasm. It catalyses the reaction N(2)-formyl-N(1)-(5-phospho-beta-D-ribosyl)glycinamide + L-glutamine + ATP + H2O = 2-formamido-N(1)-(5-O-phospho-beta-D-ribosyl)acetamidine + L-glutamate + ADP + phosphate + H(+). It functions in the pathway purine metabolism; IMP biosynthesis via de novo pathway; 5-amino-1-(5-phospho-D-ribosyl)imidazole from N(2)-formyl-N(1)-(5-phospho-D-ribosyl)glycinamide: step 1/2. In terms of biological role, part of the phosphoribosylformylglycinamidine synthase complex involved in the purines biosynthetic pathway. Catalyzes the ATP-dependent conversion of formylglycinamide ribonucleotide (FGAR) and glutamine to yield formylglycinamidine ribonucleotide (FGAM) and glutamate. The FGAM synthase complex is composed of three subunits. PurQ produces an ammonia molecule by converting glutamine to glutamate. PurL transfers the ammonia molecule to FGAR to form FGAM in an ATP-dependent manner. PurS interacts with PurQ and PurL and is thought to assist in the transfer of the ammonia molecule from PurQ to PurL. The sequence is that of Phosphoribosylformylglycinamidine synthase subunit PurL from Methanobrevibacter smithii (strain ATCC 35061 / DSM 861 / OCM 144 / PS).